The primary structure comprises 398 residues: Acetate kinase (398 aa).

Asn-8 contacts Mg(2+). Position 15 (Lys-15) interacts with ATP. Arg-92 contributes to the substrate binding site. Asp-149 acts as the Proton donor/acceptor in catalysis. Residues His-209 to Gly-213, Asp-283 to Arg-285, and Gly-331 to Asn-335 each bind ATP. Residue Glu-385 participates in Mg(2+) binding.

Belongs to the acetokinase family. Homodimer. Mg(2+) serves as cofactor. Mn(2+) is required as a cofactor.

The protein resides in the cytoplasm. It carries out the reaction acetate + ATP = acetyl phosphate + ADP. It functions in the pathway metabolic intermediate biosynthesis; acetyl-CoA biosynthesis; acetyl-CoA from acetate: step 1/2. Catalyzes the formation of acetyl phosphate from acetate and ATP. Can also catalyze the reverse reaction. This Corynebacterium efficiens (strain DSM 44549 / YS-314 / AJ 12310 / JCM 11189 / NBRC 100395) protein is Acetate kinase.